Reading from the N-terminus, the 477-residue chain is Solute carrier family 2, facilitated glucose transporter member 8 (477 aa).

Residues 1–25 (MSPEDPQETQPLLRPPEARTPRGRR) are Cytoplasmic-facing. The Dileucine internalization motif motif lies at 12–13 (LL). A helical transmembrane segment spans residues 26–46 (VFLASFAAALGPLSFGFALGY). Over 47–70 (SSPAIPSLRRTAPPALRLGDNAAS) the chain is Extracellular. A helical membrane pass occupies residues 71-91 (WFGAVVTLGAAAGGILGGWLL). Residues 92-96 (DRAGR) are Cytoplasmic-facing. Residues 97–117 (KLSLLLCTVPFVTGFAVITAA) traverse the membrane as a helical segment. Topologically, residues 118-127 (RDVWMLLGGR) are extracellular. The helical transmembrane segment at 128-148 (LLTGLACGVASLVAPVYISEI) threads the bilayer. Residues 149–156 (AYPAVRGL) lie on the Cytoplasmic side of the membrane. A helical membrane pass occupies residues 157–177 (LGSCVQLMVVTGILLAYVAGW). Gln-162 contacts D-glucose. The Extracellular segment spans residues 178–182 (VLEWR). The helical transmembrane segment at 183–203 (WLAVLGCVPPTLMLLLMCYMP) threads the bilayer. The Cytoplasmic segment spans residues 204-257 (ETPRFLLTQHQYQEAMAALRFLWGSEEGWEEPPVGAEHQGFQLALLRRPGIYKP). A helical transmembrane segment spans residues 258–278 (LIIGISLMVFQQLSGVNAIMF). D-glucose is bound by residues 268–269 (QQ) and Asn-274. Topologically, residues 279-293 (YANSIFEEAKFKDSS) are extracellular. A helical transmembrane segment spans residues 294–314 (LASVTVGIIQVLFTAVAALIM). Residues 315-320 (DRAGRR) are Cytoplasmic-facing. A helical membrane pass occupies residues 321-341 (LLLALSGVIMVFSMSAFGTYF). At 342 to 367 (KLTQSLPSNSSHVGLVPIAAEPVDVQ) the chain is on the extracellular side. Asn-350 carries N-linked (GlcNAc...) asparagine glycosylation. The chain crosses the membrane as a helical span at residues 368-388 (VGLAWLAVGSMCLFIAGFAVG). The Cytoplasmic portion of the chain corresponds to 389 to 404 (WGPIPWLLMSEIFPLH). Trp-394 contacts D-glucose. Residues 405-425 (VKGVATGICVLTNWFMAFLVT) traverse the membrane as a helical segment. The Extracellular portion of the chain corresponds to 426 to 438 (KEFSSVMEMLRPY). Residues 439–459 (GAFWLTAAFCALSVLFTLTVV) form a helical membrane-spanning segment. Residues 460 to 477 (PETKGRTLEQVTAHFEGR) lie on the Cytoplasmic side of the membrane.

Belongs to the major facilitator superfamily. Sugar transporter (TC 2.A.1.1) family. Glucose transporter subfamily. In terms of assembly, interacts with AP2B1. Also able to mediate the transport of dehydroascorbate. In terms of tissue distribution, highest level of expression in placenta and testis. Highly expressed in adult and pubertal testis, but not prepubertal testis. Lower levels of expression in brain, liver, heart, kidney, fat and skeletal muscle.

The protein resides in the cell membrane. It is found in the cytoplasmic vesicle membrane. The catalysed reaction is D-glucose(out) = D-glucose(in). It carries out the reaction D-fructose(out) = D-fructose(in). The enzyme catalyses L-dehydroascorbate(out) = L-dehydroascorbate(in). It catalyses the reaction alpha,alpha-trehalose(in) = alpha,alpha-trehalose(out). Its activity is regulated as follows. Inhibited by cytochalasin B. Functionally, insulin-regulated facilitative hexose transporter that mediates the transport of glucose and fructose. Facilitates hepatic influx of dietary trehalose, which in turn inhibits glucose and fructose influx triggering a starvation signal and hepatic autophagy through activation of AMPK and ULK1. Also able to mediate the transport of dehydroascorbate. This Mus musculus (Mouse) protein is Solute carrier family 2, facilitated glucose transporter member 8.